The following is a 171-amino-acid chain: uncharacterized protein (171 aa).

The N-terminal stretch at 1-20 (MRRVLFSCFCGLLWSSSGWA) is a signal peptide. Cys-40 and Cys-80 are disulfide-bonded.

It belongs to the fimbrial protein family.

Its subcellular location is the fimbrium. Its function is as follows. Part of the sfmACDHF fimbrial operon. Could contribute to adhesion to various surfaces in specific environmental niches. Increases adhesion to eukaryotic T24 bladder epithelial cells in the absence of fim genes. This is an uncharacterized protein from Escherichia coli (strain K12).